Here is a 179-residue protein sequence, read N- to C-terminus: ATP synthase subunit delta (179 aa).

Belongs to the ATPase delta chain family. In terms of assembly, F-type ATPases have 2 components, F(1) - the catalytic core - and F(0) - the membrane proton channel. F(1) has five subunits: alpha(3), beta(3), gamma(1), delta(1), epsilon(1). F(0) has three main subunits: a(1), b(2) and c(10-14). The alpha and beta chains form an alternating ring which encloses part of the gamma chain. F(1) is attached to F(0) by a central stalk formed by the gamma and epsilon chains, while a peripheral stalk is formed by the delta and b chains.

The protein localises to the cell inner membrane. Its function is as follows. F(1)F(0) ATP synthase produces ATP from ADP in the presence of a proton or sodium gradient. F-type ATPases consist of two structural domains, F(1) containing the extramembraneous catalytic core and F(0) containing the membrane proton channel, linked together by a central stalk and a peripheral stalk. During catalysis, ATP synthesis in the catalytic domain of F(1) is coupled via a rotary mechanism of the central stalk subunits to proton translocation. In terms of biological role, this protein is part of the stalk that links CF(0) to CF(1). It either transmits conformational changes from CF(0) to CF(1) or is implicated in proton conduction. This Anaeromyxobacter sp. (strain Fw109-5) protein is ATP synthase subunit delta.